A 745-amino-acid polypeptide reads, in one-letter code: uncharacterized protein (745 aa).

One can recognise an HTH araC/xylS-type domain in the interval Asn-158–Asp-256. 2 DNA-binding regions (H-T-H motif) span residues Ser-175 to Leu-196 and Ile-223 to Thr-246.

This is an uncharacterized protein from Staphylococcus aureus (strain Mu50 / ATCC 700699).